The sequence spans 436 residues: NAD(P)-dependent benzaldehyde dehydrogenase (436 aa).

Residues 117 to 119 (GPF), 143 to 147 (KPSET), 175 to 178 (RDEN), 193 to 194 (GS), 215 to 216 (EL), cysteine 249, and 337 to 339 (ELF) contribute to the NADP(+) site. Residues glutamate 215 and cysteine 249 contribute to the active site.

Belongs to the aldehyde dehydrogenase family.

It catalyses the reaction benzaldehyde + NAD(+) + H2O = benzoate + NADH + 2 H(+). The enzyme catalyses benzaldehyde + NADP(+) + H2O = benzoate + NADPH + 2 H(+). Its pathway is aromatic compound metabolism; (R)-mandelate degradation; benzoate from (R)-mandelate: step 4/4. In terms of biological role, NAD or NADP-dependent benzaldehyde dehydrogenase that catalyzes the conversion of benzaldehyde into benzoate in the (R)-mandelate degradation pathway. The protein is NAD(P)-dependent benzaldehyde dehydrogenase (mdlD) of Pseudomonas putida (Arthrobacter siderocapsulatus).